Here is a 110-residue protein sequence, read N- to C-terminus: UPF0122 protein BCAH187_A3894 (110 aa).

This sequence belongs to the UPF0122 family.

Its function is as follows. Might take part in the signal recognition particle (SRP) pathway. This is inferred from the conservation of its genetic proximity to ftsY/ffh. May be a regulatory protein. In Bacillus cereus (strain AH187), this protein is UPF0122 protein BCAH187_A3894.